Here is a 473-residue protein sequence, read N- to C-terminus: Exodeoxyribonuclease I (473 aa).

The 180-residue stretch at 9-188 (IYDYESFGVN…AMADVYATIA (180 aa)) folds into the Exonuclease domain. Mg(2+) is bound by residues aspartate 11, glutamate 13, and aspartate 182. Glutamate 13 contributes to the substrate binding site. An ExoI SH3-like domain is found at 198-353 (PKLFQYFFEN…KVADIFNEER (156 aa)). An ExoI C-terminal domain is found at 356–472 (ASNDNVETEL…QVYEYGIKLL (117 aa)).

Monomer. Interacts with ssb (via C-terminus); this interaction stimulates the exonuclease activity by recruiting the enzyme to its substrate. Requires Mg(2+) as cofactor.

It carries out the reaction Exonucleolytic cleavage in the 3'- to 5'-direction to yield nucleoside 5'-phosphates.. Functionally, degrades single-stranded DNA (ssDNA) in a highly processive manner. Also functions as a DNA deoxyribophosphodiesterase that releases deoxyribose-phosphate moieties following the cleavage of DNA at an apurinic/apyrimidinic (AP) site by either an AP endonuclease or AP lyase. Involved in genome maintenance but probably not in phase variation, which contributes to the virulence and disease. This chain is Exodeoxyribonuclease I (sbcB), found in Haemophilus influenzae (strain ATCC 51907 / DSM 11121 / KW20 / Rd).